The following is a 95-amino-acid chain: Putative septation protein SpoVG (95 aa).

This sequence belongs to the SpoVG family.

Its function is as follows. Could be involved in septation. The protein is Putative septation protein SpoVG of Brevibacillus brevis (strain 47 / JCM 6285 / NBRC 100599).